The primary structure comprises 216 residues: Adenylate kinase (216 aa).

Residue 10 to 15 (GAGKGT) participates in ATP binding. Residues 30-59 (STGDMFRAAMKAETELGLQAKSFIDKGALV) form an NMP region. AMP is bound by residues T31, R36, 57–59 (ALV), 85–88 (GFPR), and Q92. The interval 126-163 (GRRICKECGATYHLEFNPPAKADVCDKCGGELYQRSDD) is LID. R127 serves as a coordination point for ATP. Positions 130 and 133 each coordinate Zn(2+). 136–137 (TY) contacts ATP. 2 residues coordinate Zn(2+): C150 and C153. Residues R160 and R171 each contribute to the AMP site. Position 199 (Q199) interacts with ATP.

The protein belongs to the adenylate kinase family. In terms of assembly, monomer.

Its subcellular location is the cytoplasm. The catalysed reaction is AMP + ATP = 2 ADP. It participates in purine metabolism; AMP biosynthesis via salvage pathway; AMP from ADP: step 1/1. Functionally, catalyzes the reversible transfer of the terminal phosphate group between ATP and AMP. Plays an important role in cellular energy homeostasis and in adenine nucleotide metabolism. This chain is Adenylate kinase, found in Bacillus mycoides (strain KBAB4) (Bacillus weihenstephanensis).